Reading from the N-terminus, the 304-residue chain is Non-specific ribonucleoside hydrolase RihC (304 aa).

The active site involves His-233.

It belongs to the IUNH family. RihC subfamily.

Hydrolyzes both purine and pyrimidine ribonucleosides with a broad-substrate specificity. The protein is Non-specific ribonucleoside hydrolase RihC of Escherichia coli (strain SMS-3-5 / SECEC).